The following is a 229-amino-acid chain: Glutathione S-transferase 3 (229 aa).

At alanine 2 the chain carries Blocked amino end (Ala). A GST N-terminal domain is found at 3–83 (AKPVLYYFNG…YIAGKYNLYG (81 aa)). Glutathione contacts are provided by residues tyrosine 9, 54 to 55 (QV), and 67 to 68 (QT). The GST C-terminal domain maps to 85-207 (DLKERALIDM…LAPGSKRKPI (123 aa)).

The protein belongs to the GST superfamily. Alpha family. Homodimer or heterodimer (with a subunit from group CL-4).

It localises to the cytoplasm. It carries out the reaction RX + glutathione = an S-substituted glutathione + a halide anion + H(+). In terms of biological role, catalyzes the conjugation of GSH to a wide variety of electrophilic alkylating agents. Also involved in the metabolism of lipid hydroperoxides, prostaglandins and leukotriene A4 and in binding of non-substrate hydrophobic ligands such as bile acids, a number of drugs and thyroid hormones. This GST does not exhibit peroxidase activity. This Gallus gallus (Chicken) protein is Glutathione S-transferase 3.